We begin with the raw amino-acid sequence, 307 residues long: Elongation factor Ts (307 aa).

Positions Thr80–Val83 are involved in Mg(2+) ion dislocation from EF-Tu.

The protein belongs to the EF-Ts family.

The protein resides in the cytoplasm. Its function is as follows. Associates with the EF-Tu.GDP complex and induces the exchange of GDP to GTP. It remains bound to the aminoacyl-tRNA.EF-Tu.GTP complex up to the GTP hydrolysis stage on the ribosome. This chain is Elongation factor Ts, found in Clostridium botulinum (strain Kyoto / Type A2).